Consider the following 312-residue polypeptide: DNA-directed RNA polymerase subunit alpha (312 aa).

Residues 1-226 form an alpha N-terminal domain (alpha-NTD) region; sequence MIEFKKPNIT…EHFKAFESAD (226 aa). Positions 243 to 312 are alpha C-terminal domain (alpha-CTD); that stretch reads KEKKLEMTIE…DLGLSLRQED (70 aa).

The protein belongs to the RNA polymerase alpha chain family. In terms of assembly, homodimer. The RNAP catalytic core consists of 2 alpha, 1 beta, 1 beta' and 1 omega subunit. When a sigma factor is associated with the core the holoenzyme is formed, which can initiate transcription.

The catalysed reaction is RNA(n) + a ribonucleoside 5'-triphosphate = RNA(n+1) + diphosphate. DNA-dependent RNA polymerase catalyzes the transcription of DNA into RNA using the four ribonucleoside triphosphates as substrates. In Lactobacillus delbrueckii subsp. bulgaricus (strain ATCC 11842 / DSM 20081 / BCRC 10696 / JCM 1002 / NBRC 13953 / NCIMB 11778 / NCTC 12712 / WDCM 00102 / Lb 14), this protein is DNA-directed RNA polymerase subunit alpha.